Consider the following 394-residue polypeptide: Elongation factor Tu (394 aa).

Residues 10 to 205 enclose the tr-type G domain; it reads KPHMNVGTIG…SMDNYFDLPE (196 aa). The interval 19–26 is G1; sequence GHVDHGKT. 19–26 contacts GTP; it reads GHVDHGKT. Thr-26 is a Mg(2+) binding site. A G2 region spans residues 61 to 65; that stretch reads GITIN. The interval 82–85 is G3; the sequence is DCPG. GTP-binding positions include 82-86 and 137-140; these read DCPGH and NKLD. The tract at residues 137–140 is G4; sequence NKLD. Positions 173 to 175 are G5; it reads SAF.

This sequence belongs to the TRAFAC class translation factor GTPase superfamily. Classic translation factor GTPase family. EF-Tu/EF-1A subfamily. As to quaternary structure, monomer.

Its subcellular location is the cytoplasm. The catalysed reaction is GTP + H2O = GDP + phosphate + H(+). GTP hydrolase that promotes the GTP-dependent binding of aminoacyl-tRNA to the A-site of ribosomes during protein biosynthesis. This is Elongation factor Tu from Borreliella afzelii (strain PKo) (Borrelia afzelii).